Reading from the N-terminus, the 319-residue chain is Beta-sarcoglycan (319 aa).

The span at 1-10 (MAAAAAAAAA) shows a compositional bias: low complexity. Residues 1–33 (MAAAAAAAAAEQQSSNGPVKKSMREKAVERRNV) form a disordered region. The Cytoplasmic segment spans residues 1–66 (MAAAAAAAAA…GLRGRKGNLA (66 aa)). The segment covering 22-33 (SMREKAVERRNV) has biased composition (basic and acidic residues). A helical; Signal-anchor for type II membrane protein transmembrane segment spans residues 67-87 (ICVIILLFILAVINLIITLVI). The Extracellular portion of the chain corresponds to 88–318 (WAVIRIGPNG…QISDNPCGNT (231 aa)). N-linked (GlcNAc...) asparagine glycans are attached at residues asparagine 159, asparagine 212, and asparagine 259. Cystine bridges form between cysteine 289–cysteine 315 and cysteine 291–cysteine 308.

This sequence belongs to the sarcoglycan beta/delta/gamma/zeta family. Cross-link to form 2 major subcomplexes: one consisting of SGCB, SGCD and SGCG and the other consisting of SGCB and SGCD. The association between SGCB and SGCG is particularly strong while SGCA is loosely associated with the other sarcoglycans. In terms of processing, disulfide bonds are present.

It is found in the cell membrane. The protein resides in the sarcolemma. It localises to the cytoplasm. Its subcellular location is the cytoskeleton. Component of the sarcoglycan complex, a subcomplex of the dystrophin-glycoprotein complex which forms a link between the F-actin cytoskeleton and the extracellular matrix. This chain is Beta-sarcoglycan (SGCB), found in Pongo abelii (Sumatran orangutan).